We begin with the raw amino-acid sequence, 199 residues long: dITP/XTP pyrophosphatase (199 aa).

7–12 (TSNRGK) contributes to the substrate binding site. The active-site Proton acceptor is Asp-74. A Mg(2+)-binding site is contributed by Asp-74. Substrate-binding positions include Ser-75, 156-159 (FGYD), Lys-179, and 184-185 (HR).

The protein belongs to the HAM1 NTPase family. Homodimer. The cofactor is Mg(2+).

The enzyme catalyses XTP + H2O = XMP + diphosphate + H(+). The catalysed reaction is dITP + H2O = dIMP + diphosphate + H(+). It catalyses the reaction ITP + H2O = IMP + diphosphate + H(+). Functionally, pyrophosphatase that catalyzes the hydrolysis of nucleoside triphosphates to their monophosphate derivatives, with a high preference for the non-canonical purine nucleotides XTP (xanthosine triphosphate), dITP (deoxyinosine triphosphate) and ITP. Seems to function as a house-cleaning enzyme that removes non-canonical purine nucleotides from the nucleotide pool, thus preventing their incorporation into DNA/RNA and avoiding chromosomal lesions. The polypeptide is dITP/XTP pyrophosphatase (Sulfurimonas denitrificans (strain ATCC 33889 / DSM 1251) (Thiomicrospira denitrificans (strain ATCC 33889 / DSM 1251))).